Reading from the N-terminus, the 156-residue chain is ATP synthase subunit b', chloroplastic (156 aa).

A helical transmembrane segment spans residues 24–44; sequence ATLPLVAIQFILLMVTLNIIL.

The protein belongs to the ATPase B chain family. F-type ATPases have 2 components, F(1) - the catalytic core - and F(0) - the membrane proton channel. F(1) has five subunits: alpha(3), beta(3), gamma(1), delta(1), epsilon(1). F(0) has four main subunits: a(1), b(1), b'(1) and c(10-14). The alpha and beta chains form an alternating ring which encloses part of the gamma chain. F(1) is attached to F(0) by a central stalk formed by the gamma and epsilon chains, while a peripheral stalk is formed by the delta, b and b' chains.

It localises to the plastid. It is found in the chloroplast thylakoid membrane. Its function is as follows. F(1)F(0) ATP synthase produces ATP from ADP in the presence of a proton or sodium gradient. F-type ATPases consist of two structural domains, F(1) containing the extramembraneous catalytic core and F(0) containing the membrane proton channel, linked together by a central stalk and a peripheral stalk. During catalysis, ATP synthesis in the catalytic domain of F(1) is coupled via a rotary mechanism of the central stalk subunits to proton translocation. Functionally, component of the F(0) channel, it forms part of the peripheral stalk, linking F(1) to F(0). The b'-subunit is a diverged and duplicated form of b found in plants and photosynthetic bacteria. The protein is ATP synthase subunit b', chloroplastic of Thalassiosira pseudonana (Marine diatom).